A 185-amino-acid polypeptide reads, in one-letter code: UPF0149 protein PD_0802 (185 aa).

It belongs to the UPF0149 family.

The polypeptide is UPF0149 protein PD_0802 (Xylella fastidiosa (strain Temecula1 / ATCC 700964)).